The sequence spans 151 residues: Transcriptional repressor NrdR (151 aa).

The segment at cysteine 3–cysteine 34 is a zinc-finger region. An ATP-cone domain is found at isoleucine 49–threonine 139.

This sequence belongs to the NrdR family. It depends on Zn(2+) as a cofactor.

Negatively regulates transcription of bacterial ribonucleotide reductase nrd genes and operons by binding to NrdR-boxes. The sequence is that of Transcriptional repressor NrdR from Clostridium botulinum (strain Loch Maree / Type A3).